We begin with the raw amino-acid sequence, 268 residues long: MAVNVYSTSVTSDNLSRHDMLAWINESLQLNLTKIEQLCSGAAYCQFMDMLFPGSIALKKVKFQAKLEHEYIQNFKILQAGFKRMGVDKIIPVDKLVKGKFQDNFEFVQWFKKFFDANYDGKEYDPVAARQGQETAMAPSLVAPALNKPKKPLSSSSAAPQRPITTHRTTATPKAGPGVVRKNPGVGNGDDEAAELMQQVNVLKLTVEDLEKERDFYFGKLRNIELICQENEGENNPVLQRIVDILYATDEGFVIPDEGGPQEEQEEY.

Ala2 bears the N-acetylalanine mark. The 103-residue stretch at 14 to 116 folds into the Calponin-homology (CH) domain; it reads NLSRHDMLAW…FVQWFKKFFD (103 aa). The residue at position 66 (Lys66) is an N6-crotonyllysine. A Phosphotyrosine modification is found at Tyr124. The segment at 124–268 is interaction with MTUS2/TIP150; sequence YDPVAARQGQ…GGPQEEQEEY (145 aa). Residues 147–160 show a composition bias toward low complexity; the sequence is NKPKKPLSSSSAAP. The tract at residues 147–184 is disordered; sequence NKPKKPLSSSSAAPQRPITTHRTTATPKAGPGVVRKNP. A Phosphoserine modification is found at Ser155. Residues 163–172 show a composition bias toward polar residues; that stretch reads PITTHRTTAT. The region spanning 185 to 255 is the EB1 C-terminal domain; it reads GVGNGDDEAA…LYATDEGFVI (71 aa). An interaction with CDK5RAP2 region spans residues 185–268; the sequence is GVGNGDDEAA…GGPQEEQEEY (84 aa). Residues 206–211 are interaction with APC; it reads TVEDLE. The DCTN1-binding stretch occupies residues 208–268; it reads EDLEKERDFY…GGPQEEQEEY (61 aa). N6-acetyllysine is present on Lys220. The interval 220–242 is APC-binding; the sequence is KLRNIELICQENEGENNPVLQRI. The tract at residues 232-255 is interaction with SKA1; sequence EGENNPVLQRIVDILYATDEGFVI.

The protein belongs to the MAPRE family. Homodimer. Heterodimer with MAPRE3. Interacts with DCTN1, DCTN2, TERF1 and dynein intermediate chain. Interaction with DIAPH1 and DIAPH2. Interacts (via C-terminal residues 206-211) with APC (via C-terminal residues 2674-2845); the interaction inhibits association with and bundling of F-actin. Interacts with CLASP2, DST, KIF2C and STIM1; probably required for their targeting to the growing microtubule plus ends. Interacts with MTUS2; interaction is direct and probably targets MTUS2 to microtubules. Interacts (via C-terminus) with SKA1 (via SXIP motif); the interaction is direct and stabilizes the kinetochore-microtubule attachment of the SKA1 complex. Interacts with APC2. Interacts with CLASP1. Interacts with CDK5RAP2. Interacts with MACF1. Interacts with RABL2/RABL2A; binds preferentially to GTP-bound RABL2. Interacts with KCNAB2. Interacts (via C-terminus) with CLIP1. Interacts with SLAIN2 and SLAIN1. Interacts with KIF18B; this interaction is required for efficient accumulation of KIF18B at microtubule plus ends. Interacts with MISP. Interacts with KNSTRN. Interacts with NCKAP5L. Interacts with CAMSAP2. Interacts with PDE4DIP isoform 13/MMG8/SMYLE; this interaction is required for its recruitment to the Golgi apparatus. Forms a pericentrosomal complex with AKAP9, CDK5RAP2 and PDE4DIP isoform 13/MMG8/SMYLE; within this complex, MAPRE1 binding to CDK5RAP2 may be mediated by PDE4DIP. Interacts with AKNA. Interacts with GAS2L1, GAS2L2, and GAS2L3. Acetylation at Lys-220 by KAT2B/PCAF promotes dynamic kinetochore-microtubule interactions in early mitosis. In terms of processing, crotonylated by KAT5 during mitosis, promoting astral microtubule plasticity and dynamic connection between astral microtubules and the cortex during mitotic chromosome segregation, thereby ensuring accurate spindle positioning in mitosis. Decrotonylated by HDAC3.

Its subcellular location is the cytoplasm. It is found in the cytoskeleton. It localises to the microtubule organizing center. The protein localises to the centrosome. The protein resides in the golgi apparatus. Its subcellular location is the spindle. It is found in the spindle pole. Functionally, plus-end tracking protein (+TIP) that binds to the plus-end of microtubules and regulates the dynamics of the microtubule cytoskeleton. Recruits other +TIP proteins to microtubules by binding to a conserved Ser-X-Leu-Pro (SXLP) motif in their polypeptide chains. Promotes cytoplasmic microtubule nucleation and elongation. Involved in mitotic spindle positioning by stabilizing microtubules and promoting dynamic connection between astral microtubules and the cortex during mitotic chromosome segregation. Assists chromosome alignment in metaphase by recruiting the SKA complex to the spindle and stabilizing its interactions with microtubule bundles (K-fibers). Also acts as a regulator of minus-end microtubule organization: interacts with the complex formed by AKAP9 and PDE4DIP, leading to recruit CAMSAP2 to the Golgi apparatus, thereby tethering non-centrosomal minus-end microtubules to the Golgi, an important step for polarized cell movement. Promotes elongation of CAMSAP2-decorated microtubule stretches on the minus-end of microtubules. Acts as a regulator of autophagosome transport via interaction with CAMSAP2. Functions downstream of Rho GTPases and DIAPH1 in stable microtubule formation. May play a role in cell migration. This chain is Microtubule-associated protein RP/EB family member 1 (MAPRE1), found in Bos taurus (Bovine).